Here is a 46-residue protein sequence, read N- to C-terminus: U2-plectoxin-Pt1a (46 aa).

Contains 4 disulfide bonds. In terms of tissue distribution, expressed by the venom gland.

The protein localises to the secreted. Its function is as follows. Potent toxin that may paralyze and/or kill insect pests such as H.virescens (lepidoptera), S.exigua (beet armyworm) and M.sexta (tobacco hornworm). This is U2-plectoxin-Pt1a from Plectreurys tristis (Spider).